Here is a 282-residue protein sequence, read N- to C-terminus: B3 domain-containing protein At5g25475 (282 aa).

Positions 20–114 form a DNA-binding region, TF-B3; sequence WKSLSPGQTW…NLEVQIFKNN (95 aa). Residues 127 to 178 form a disordered region; that stretch reads PETEPFHPTPKKPHKETTPASSFASGSGCSANGGTNGRGKQRSSDVKNPERY. The span at 144-159 shows a compositional bias: low complexity; it reads TPASSFASGSGCSANG.

It localises to the nucleus. The chain is B3 domain-containing protein At5g25475 from Arabidopsis thaliana (Mouse-ear cress).